The primary structure comprises 275 residues: Autophagy protein 5 (275 aa).

Position 1 is an N-acetylmethionine (methionine 1). Residue lysine 130 forms a Glycyl lysine isopeptide (Lys-Gly) (interchain with G-Cter in ATG12) linkage.

It belongs to the ATG5 family. In terms of assembly, forms a conjugate with ATG12. Part of the minor complex composed of 4 sets of ATG12-ATG5 and ATG16L1 (400 kDa); this complex interacts with ATG3 leading to disruption of ATG7 interaction and promotion of ATG8-like proteins lipidation. Forms an 800-kDa complex composed of ATG12-ATG5 and ATG16L2. The ATG12-ATG5 conjugate interacts with RAB33A; this interaction is bridged by ATG16L1 and promotes ATG12-ATG5-ATG16L1 complex recruitment to phagophores. Interacts with TECPR1; the interaction is direct and does not take place when ATG16L1 is associated with the ATG5-ATG12 conjugate. Interacts with DHX58/RIG-1, IFIH1/MDA5 and MAVS/IPS-1 in monomeric form as well as in ATG12-ATG5 conjugate form. The interaction with MAVS is further enhanced upon vesicular stomatitis virus (VSV) infection. Interacts with ATG3. Interacts with ATG7 and ATG10. Interacts with FADD. Interacts with Bassoon/BSN; this interaction is important for the regulation of presynaptic autophagy. Interacts with ATG16L2. In terms of processing, conjugated to ATG12; which is essential for autophagy, but is not required for association with isolation membrane. Post-translationally, acetylated by EP300. As to expression, ubiquitous.

The protein localises to the cytoplasm. It is found in the preautophagosomal structure membrane. Its function is as follows. Involved in autophagic vesicle formation. Conjugation with ATG12, through a ubiquitin-like conjugating system involving ATG7 as an E1-like activating enzyme and ATG10 as an E2-like conjugating enzyme, is essential for its function. The ATG12-ATG5 conjugate acts as an E3-like enzyme which is required for lipidation of ATG8 family proteins and their association to the vesicle membranes. Involved in mitochondrial quality control after oxidative damage, and in subsequent cellular longevity. Plays a critical role in multiple aspects of lymphocyte development and is essential for both B and T lymphocyte survival and proliferation. Required for optimal processing and presentation of antigens for MHC II. Involved in the maintenance of axon morphology and membrane structures, as well as in normal adipocyte differentiation. Promotes primary ciliogenesis through removal of OFD1 from centriolar satellites and degradation of IFT20 via the autophagic pathway. As part of the ATG8 conjugation system with ATG12 and ATG16L1, required for recruitment of LRRK2 to stressed lysosomes and induction of LRRK2 kinase activity in response to lysosomal stress. Functionally, may play an important role in the apoptotic process, possibly within the modified cytoskeleton. Its expression is a relatively late event in the apoptotic process, occurring downstream of caspase activity. Plays a crucial role in IFN-gamma-induced autophagic cell death by interacting with FADD. In terms of biological role, (Microbial infection) May act as a proviral factor. In association with ATG12, negatively regulates the innate antiviral immune response by impairing the type I IFN production pathway upon vesicular stomatitis virus (VSV) infection. The chain is Autophagy protein 5 from Mus musculus (Mouse).